A 95-amino-acid polypeptide reads, in one-letter code: Large ribosomal subunit protein uL23 (95 aa).

The protein belongs to the universal ribosomal protein uL23 family. In terms of assembly, part of the 50S ribosomal subunit. Contacts protein L29, and trigger factor when it is bound to the ribosome.

In terms of biological role, one of the early assembly proteins it binds 23S rRNA. One of the proteins that surrounds the polypeptide exit tunnel on the outside of the ribosome. Forms the main docking site for trigger factor binding to the ribosome. The polypeptide is Large ribosomal subunit protein uL23 (Desulfitobacterium hafniense (strain DSM 10664 / DCB-2)).